Reading from the N-terminus, the 209-residue chain is FMN-dependent NADH:quinone oxidoreductase (209 aa).

FMN-binding positions include Ser-10, 16–18, and 98–101; these read SHS and MWNF.

This sequence belongs to the azoreductase type 1 family. Homodimer. The cofactor is FMN.

The catalysed reaction is 2 a quinone + NADH + H(+) = 2 a 1,4-benzosemiquinone + NAD(+). It catalyses the reaction N,N-dimethyl-1,4-phenylenediamine + anthranilate + 2 NAD(+) = 2-(4-dimethylaminophenyl)diazenylbenzoate + 2 NADH + 2 H(+). Quinone reductase that provides resistance to thiol-specific stress caused by electrophilic quinones. Its function is as follows. Also exhibits azoreductase activity. Catalyzes the reductive cleavage of the azo bond in aromatic azo compounds to the corresponding amines. The sequence is that of FMN-dependent NADH:quinone oxidoreductase from Nitratidesulfovibrio vulgaris (strain ATCC 29579 / DSM 644 / CCUG 34227 / NCIMB 8303 / VKM B-1760 / Hildenborough) (Desulfovibrio vulgaris).